Reading from the N-terminus, the 653-residue chain is Chaperone protein HtpG (653 aa).

Residues 1–361 (MSETNQVQNH…SNDLPLNVSR (361 aa)) are a; substrate-binding. Residues 362–578 (EILQDNKVTQ…DDDMSSQMAK (217 aa)) are b. The c stretch occupies residues 579-653 (LMASVGQEVP…LNKLMLSLTK (75 aa)).

It belongs to the heat shock protein 90 family. Homodimer.

It localises to the cytoplasm. Molecular chaperone. Has ATPase activity. The polypeptide is Chaperone protein HtpG (Colwellia psychrerythraea (strain 34H / ATCC BAA-681) (Vibrio psychroerythus)).